Here is a 683-residue protein sequence, read N- to C-terminus: Outer dynein arm-docking complex subunit 4 (683 aa).

TPR repeat units lie at residues Phe-13–Asp-46, Lys-47–Phe-80, Asn-48–Phe-80, and Cys-81–Arg-114. Residues Gln-158–Gly-179 are disordered. Residues Leu-167–Gly-179 show a composition bias toward basic residues. TPR repeat units follow at residues Leu-275–Glu-311, Gly-320–Tyr-353, Ser-360–Thr-393, Thr-397–Glu-430, and Leu-437–Val-470. Disordered regions lie at residues Glu-510–Val-537 and Val-553–Glu-683. Basic and acidic residues-rich tracts occupy residues Thr-521 to Val-537, Pro-566 to Pro-590, Gly-602 to Glu-620, and Ser-629 to Asp-675. The stretch at Asp-592–Leu-625 is one TPR 15 repeat.

As to quaternary structure, component of the outer dynein arm-docking complex along with ODAD1, ODAD2 and ODAD3. Interacts with ODAD1; this interaction may facilitate the recruitment and/or attachment of outer dynein arm docking complex proteins, including ODAD1, ODAD3 and ODAD2, to ciliary axonemes. Interacts with components of the IFT complex A, including IFT140, TTC21B/IFT139 and WDR19/IFT144, and the IFT complex B, including IFT46, IFT52 and IFT57. Interacts with CFAP53. In terms of tissue distribution, expressed in trachea multiciliated cells.

The protein resides in the cytoplasm. It localises to the cytoskeleton. Its subcellular location is the cilium axoneme. Its function is as follows. Component of the outer dynein arm-docking complex (ODA-DC) that mediates outer dynein arms (ODA) binding onto the doublet microtubule. Plays an essential role for the assembly of ODA-DC and for the docking of ODA in ciliary axoneme. This is Outer dynein arm-docking complex subunit 4 from Bos taurus (Bovine).